The primary structure comprises 269 residues: AQSVPWGISRVQAPAAHNRGLTGSGVKVAVLDTGISTHPDLNIRGGASFVPGEPSTQDGNGHGTHVAGTIAALNNSIGVLGVAPSAELYAVKVLGASGSGSVSSIAQGLEWAGNNGMHVANLSLGSPSPSATLEQAVNSATSRGVLVVAASGNSGAGSISYPARYANAMAVGATDQNNNRASFSQYGAGLDIVAPGVNVQSTYPGSTYASLNGTSMATPHVAGAAALVKQKNPSWSNVQIRNHLKNTATSLGSTNLYGSGLVNAEAATR.

Residue Q2 coordinates Ca(2+). One can recognise a Peptidase S8 domain in the interval 5–268 (PWGISRVQAP…SGLVNAEAAT (264 aa)). D32 acts as the Charge relay system in catalysis. D40 contacts Ca(2+). H62 acts as the Charge relay system in catalysis. Ca(2+) contacts are provided by L73, N75, I77, V79, A163, Y165, and A168. Catalysis depends on S215, which acts as the Charge relay system.

Belongs to the peptidase S8 family. Requires Ca(2+) as cofactor.

It localises to the secreted. It catalyses the reaction Hydrolysis of proteins with broad specificity for peptide bonds, and a preference for a large uncharged residue in P1. Hydrolyzes peptide amides.. Subtilisin is an extracellular alkaline serine protease, it catalyzes the hydrolysis of proteins and peptide amides. This is Subtilisin Savinase from Lederbergia lenta (Bacillus lentus).